A 359-amino-acid polypeptide reads, in one-letter code: 3-dehydroquinate synthase (359 aa).

Residues 71–76 (DGEAYK), 105–109 (GVIGD), 129–130 (TT), Lys142, and Lys151 contribute to the NAD(+) site. Residues Glu184, His247, and His264 each contribute to the Zn(2+) site.

The protein belongs to the sugar phosphate cyclases superfamily. Dehydroquinate synthase family. Co(2+) serves as cofactor. Zn(2+) is required as a cofactor. Requires NAD(+) as cofactor.

The protein resides in the cytoplasm. It carries out the reaction 7-phospho-2-dehydro-3-deoxy-D-arabino-heptonate = 3-dehydroquinate + phosphate. Its pathway is metabolic intermediate biosynthesis; chorismate biosynthesis; chorismate from D-erythrose 4-phosphate and phosphoenolpyruvate: step 2/7. Its function is as follows. Catalyzes the conversion of 3-deoxy-D-arabino-heptulosonate 7-phosphate (DAHP) to dehydroquinate (DHQ). The protein is 3-dehydroquinate synthase of Burkholderia vietnamiensis (strain G4 / LMG 22486) (Burkholderia cepacia (strain R1808)).